Consider the following 733-residue polypeptide: Folic acid synthesis protein fol1 (733 aa).

2 DHNA regions span residues 55–167 (VVVE…YAER) and 179–277 (IEFS…QIYR). Tyrosine 281 carries the phosphotyrosine modification. Positions 295–454 (NKIAYLSFGS…LPSQGIRLYS (160 aa)) are HPK. Residues 465–724 (ALTMGILNVT…DTKEMSKVVG (260 aa)) enclose the Pterin-binding domain. Residues 467-733 (TMGILNVTPD…GMANAIRYVP (267 aa)) are DHPS. Asparagine 472 provides a ligand contact to Mg(2+). Residues threonine 511, aspartate 546, asparagine 565, aspartate 637, lysine 677, and 712 to 714 (RVH) contribute to the (7,8-dihydropterin-6-yl)methyl diphosphate site.

This sequence in the N-terminal section; belongs to the DHNA family. In the central section; belongs to the HPPK family. It in the C-terminal section; belongs to the DHPS family. Mg(2+) is required as a cofactor.

The protein resides in the cytoplasm. The catalysed reaction is 7,8-dihydroneopterin = 6-hydroxymethyl-7,8-dihydropterin + glycolaldehyde. It catalyses the reaction 6-hydroxymethyl-7,8-dihydropterin + ATP = (7,8-dihydropterin-6-yl)methyl diphosphate + AMP + H(+). It carries out the reaction (7,8-dihydropterin-6-yl)methyl diphosphate + 4-aminobenzoate = 7,8-dihydropteroate + diphosphate. The protein operates within cofactor biosynthesis; tetrahydrofolate biosynthesis; 2-amino-4-hydroxy-6-hydroxymethyl-7,8-dihydropteridine diphosphate from 7,8-dihydroneopterin triphosphate: step 3/4. It participates in cofactor biosynthesis; tetrahydrofolate biosynthesis; 2-amino-4-hydroxy-6-hydroxymethyl-7,8-dihydropteridine diphosphate from 7,8-dihydroneopterin triphosphate: step 4/4. It functions in the pathway cofactor biosynthesis; tetrahydrofolate biosynthesis; 7,8-dihydrofolate from 2-amino-4-hydroxy-6-hydroxymethyl-7,8-dihydropteridine diphosphate and 4-aminobenzoate: step 1/2. Its function is as follows. Catalyzes three sequential steps of tetrahydrofolate biosynthesis. The chain is Folic acid synthesis protein fol1 (fol1) from Schizosaccharomyces pombe (strain 972 / ATCC 24843) (Fission yeast).